The sequence spans 355 residues: Guanine nucleotide-binding protein G(z) subunit alpha (355 aa).

The span at methionine 1–arginine 14 shows a compositional bias: basic and acidic residues. The tract at residues methionine 1 to glutamate 26 is disordered. Glycine 2 carries the N-myristoyl glycine lipid modification. Cysteine 3 carries the S-palmitoyl cysteine lipid modification. One can recognise a G-alpha domain in the interval arginine 32–cysteine 355. Positions lysine 35–threonine 48 are G1 motif. GTP is bound by residues glycine 40–serine 47, leucine 176–threonine 182, aspartate 201–glutamine 205, asparagine 270–aspartate 273, and alanine 327. Serine 47 and threonine 182 together coordinate Mg(2+). The interval aspartate 174 to threonine 182 is G2 motif. The interval phenylalanine 197–arginine 206 is G3 motif. Residues isoleucine 266–aspartate 273 form a G4 motif region. The tract at residues threonine 325–threonine 330 is G5 motif.

Belongs to the G-alpha family. G(i/o/t/z) subfamily. In terms of assembly, G-proteins are composed of 3 units; alpha, beta and gamma. The alpha chain contains the guanine nucleotide binding site. Interacts with ADGRB2.

The protein resides in the membrane. Functionally, guanine nucleotide-binding proteins (G proteins) are involved as modulators or transducers in various transmembrane signaling systems. This chain is Guanine nucleotide-binding protein G(z) subunit alpha (Gnaz), found in Mus musculus (Mouse).